Here is a 570-residue protein sequence, read N- to C-terminus: Sulfite reductase [NADPH] hemoprotein beta-component (570 aa).

4 residues coordinate [4Fe-4S] cluster: Cys434, Cys440, Cys479, and Cys483. Residue Cys483 participates in siroheme binding.

It belongs to the nitrite and sulfite reductase 4Fe-4S domain family. Alpha(8)-beta(8). The alpha component is a flavoprotein, the beta component is a hemoprotein. It depends on siroheme as a cofactor. [4Fe-4S] cluster is required as a cofactor.

The catalysed reaction is hydrogen sulfide + 3 NADP(+) + 3 H2O = sulfite + 3 NADPH + 4 H(+). The protein operates within sulfur metabolism; hydrogen sulfide biosynthesis; hydrogen sulfide from sulfite (NADPH route): step 1/1. Component of the sulfite reductase complex that catalyzes the 6-electron reduction of sulfite to sulfide. This is one of several activities required for the biosynthesis of L-cysteine from sulfate. This Salmonella paratyphi A (strain ATCC 9150 / SARB42) protein is Sulfite reductase [NADPH] hemoprotein beta-component.